A 299-amino-acid polypeptide reads, in one-letter code: Bifunctional phosphoglucose/phosphomannose isomerase (299 aa).

The SIS domain occupies 27-177 (DEVEITPSSR…IHKLMEDFQK (151 aa)). D-fructose 6-phosphate contacts are provided by glycine 44, serine 45, serine 84, serine 86, threonine 89, and arginine 132. Glutamate 200 acts as the Proton acceptor in catalysis. The D-fructose 6-phosphate site is built by histidine 216 and lysine 295. Histidine 216 acts as the Proton donor in catalysis. The Proton acceptor role is filled by lysine 295.

The protein belongs to the PGI/PMI family. In terms of assembly, homodimer.

It carries out the reaction alpha-D-glucose 6-phosphate = beta-D-fructose 6-phosphate. It catalyses the reaction D-mannose 6-phosphate = D-fructose 6-phosphate. Presence or absence of metal ions or EDTA does not significantly affect the phosphoglucose isomerase activity. Its function is as follows. Dual specificity isomerase that catalyzes the isomerization of both glucose-6-phosphate and mannose-6-phosphate to fructose-6-phosphate with nearly similar catalytic efficiency. Also catalyzes the epimerization of mannose 6-phosphate to glucose 6-phosphate but the rate of epimerization reaction is 20-fold lower than that of isomerization reaction. The sequence is that of Bifunctional phosphoglucose/phosphomannose isomerase from Pyrobaculum calidifontis (strain DSM 21063 / JCM 11548 / VA1).